Reading from the N-terminus, the 310-residue chain is Acetyl-coenzyme A carboxylase carboxyl transferase subunit beta, chloroplastic (310 aa).

The CoA carboxyltransferase N-terminal domain maps to 47 to 310 (LWARCDNCGN…LYLSVPYNKN (264 aa)). Residues Cys51, Cys54, Cys70, and Cys73 each coordinate Zn(2+). The C4-type zinc-finger motif lies at 51–73 (CDNCGNMLYVKFLKQNRSVCEEC).

It belongs to the AccD/PCCB family. Acetyl-CoA carboxylase is a heterohexamer composed of biotin carboxyl carrier protein, biotin carboxylase and 2 subunits each of ACCase subunit alpha and ACCase plastid-coded subunit beta (accD). The cofactor is Zn(2+).

Its subcellular location is the plastid. It localises to the chloroplast stroma. The enzyme catalyses N(6)-carboxybiotinyl-L-lysyl-[protein] + acetyl-CoA = N(6)-biotinyl-L-lysyl-[protein] + malonyl-CoA. Its pathway is lipid metabolism; malonyl-CoA biosynthesis; malonyl-CoA from acetyl-CoA: step 1/1. Component of the acetyl coenzyme A carboxylase (ACC) complex. Biotin carboxylase (BC) catalyzes the carboxylation of biotin on its carrier protein (BCCP) and then the CO(2) group is transferred by the transcarboxylase to acetyl-CoA to form malonyl-CoA. In Adiantum capillus-veneris (Maidenhair fern), this protein is Acetyl-coenzyme A carboxylase carboxyl transferase subunit beta, chloroplastic.